The chain runs to 412 residues: Cytochrome p450 CYP199A2 (412 aa).

Substrate contacts are provided by residues 94 to 97 (RPPS) and S247. C361 serves as a coordination point for heme.

The protein belongs to the cytochrome P450 family. Interacts with the ferredoxin-like iron-sulfur protein ThcC. Heme serves as cofactor.

It localises to the cytoplasm. It carries out the reaction 4-methoxybenzoate + AH2 + O2 = 4-hydroxybenzoate + formaldehyde + A + H2O. The oxidative demethylation of 4-methoxybenzoate requires the participation of the monooxygenase CYP199A2, the ferredoxin-like protein ThcC/RPA1872 and a ferredoxin reductase to mediate the transfer of electrons from NADH to CYP199A2. It is also active with 4-ethylbenzoate. This is Cytochrome p450 CYP199A2 from Rhodopseudomonas palustris (strain ATCC BAA-98 / CGA009).